The sequence spans 318 residues: tRNA dimethylallyltransferase (318 aa).

16–23 (GPTASGKT) contacts ATP. A substrate-binding site is contributed by 18 to 23 (TASGKT). Interaction with substrate tRNA stretches follow at residues 41-44 (DSAL), 165-169 (QRINR), 246-251 (RCVGYR), and 279-286 (KRQITWLR).

It belongs to the IPP transferase family. In terms of assembly, monomer. Mg(2+) is required as a cofactor.

It carries out the reaction adenosine(37) in tRNA + dimethylallyl diphosphate = N(6)-dimethylallyladenosine(37) in tRNA + diphosphate. In terms of biological role, catalyzes the transfer of a dimethylallyl group onto the adenine at position 37 in tRNAs that read codons beginning with uridine, leading to the formation of N6-(dimethylallyl)adenosine (i(6)A). The protein is tRNA dimethylallyltransferase of Actinobacillus succinogenes (strain ATCC 55618 / DSM 22257 / CCUG 43843 / 130Z).